The chain runs to 267 residues: 4-hydroxy-tetrahydrodipicolinate reductase (267 aa).

NAD(+) contacts are provided by residues 8 to 13 (GAAGRM) and aspartate 34. Arginine 35 provides a ligand contact to NADP(+). NAD(+) is bound by residues 98–100 (GTT) and 122–125 (AANF). Histidine 155 (proton donor/acceptor) is an active-site residue. Residue histidine 156 participates in (S)-2,3,4,5-tetrahydrodipicolinate binding. The Proton donor role is filled by lysine 159. 165-166 (GT) provides a ligand contact to (S)-2,3,4,5-tetrahydrodipicolinate.

The protein belongs to the DapB family.

It is found in the cytoplasm. It carries out the reaction (S)-2,3,4,5-tetrahydrodipicolinate + NAD(+) + H2O = (2S,4S)-4-hydroxy-2,3,4,5-tetrahydrodipicolinate + NADH + H(+). The enzyme catalyses (S)-2,3,4,5-tetrahydrodipicolinate + NADP(+) + H2O = (2S,4S)-4-hydroxy-2,3,4,5-tetrahydrodipicolinate + NADPH + H(+). It participates in amino-acid biosynthesis; L-lysine biosynthesis via DAP pathway; (S)-tetrahydrodipicolinate from L-aspartate: step 4/4. Catalyzes the conversion of 4-hydroxy-tetrahydrodipicolinate (HTPA) to tetrahydrodipicolinate. This chain is 4-hydroxy-tetrahydrodipicolinate reductase, found in Pseudomonas putida (strain ATCC 47054 / DSM 6125 / CFBP 8728 / NCIMB 11950 / KT2440).